The sequence spans 233 residues: Gamma-glutamyl-hercynylcysteine sulfoxide hydrolase (233 aa).

The active-site Nucleophile is the C2. Residues 2–233 enclose the Glutamine amidotransferase type-2 domain; it reads CRHLGWLGAQ…TALDRAKGPR (232 aa).

It catalyses the reaction gamma-L-glutamyl-hercynylcysteine S-oxide + H2O = S-(hercyn-2-yl)-L-cysteine S-oxide + L-glutamate. The protein operates within amino-acid biosynthesis; ergothioneine biosynthesis. In terms of biological role, catalyzes the hydrolysis of the gamma-glutamyl amide bond of hercynyl-gamma-L-glutamyl-L-cysteine sulfoxide to produce hercynylcysteine sulfoxide, a step in the biosynthesis pathway of ergothioneine. ERG is one of the major redox buffers which protects bacteria against redox stressors and antibiotics; loss of ERG or mycothiol (MSH, the other major redox buffer in this bacteria) leads to respiratory alterations and bioenergetic deficiencies that negatively impact virulence. This Mycobacterium tuberculosis (strain CDC 1551 / Oshkosh) protein is Gamma-glutamyl-hercynylcysteine sulfoxide hydrolase.